The primary structure comprises 260 residues: uncharacterized protein (260 aa).

The first 22 residues, 1–22 (MKSIKRIGLCISLLILIIFATS), serve as a signal peptide directing secretion. Cysteine 23 is lipidated: N-palmitoyl cysteine. Cysteine 23 carries the S-diacylglycerol cysteine lipid modification.

The protein belongs to the staphylococcal tandem lipoprotein family.

It is found in the cell membrane. This is an uncharacterized protein from Staphylococcus aureus (strain N315).